A 665-amino-acid chain; its full sequence is DNA ligase (665 aa).

NAD(+) contacts are provided by residues 35-39, 88-89, and E117; these read DAIYD and SL. The N6-AMP-lysine intermediate role is filled by K119. The NAD(+) site is built by R140, E174, K290, and K314. Zn(2+) is bound by residues C406, C409, C424, and C429. One can recognise a BRCT domain in the interval 588–665; sequence KKTERFAQLS…EEAFNELLVS (78 aa).

Belongs to the NAD-dependent DNA ligase family. LigA subfamily. It depends on Mg(2+) as a cofactor. Mn(2+) serves as cofactor.

It catalyses the reaction NAD(+) + (deoxyribonucleotide)n-3'-hydroxyl + 5'-phospho-(deoxyribonucleotide)m = (deoxyribonucleotide)n+m + AMP + beta-nicotinamide D-nucleotide.. Its function is as follows. DNA ligase that catalyzes the formation of phosphodiester linkages between 5'-phosphoryl and 3'-hydroxyl groups in double-stranded DNA using NAD as a coenzyme and as the energy source for the reaction. It is essential for DNA replication and repair of damaged DNA. The protein is DNA ligase of Metamycoplasma arthritidis (strain 158L3-1) (Mycoplasma arthritidis).